The following is a 405-amino-acid chain: Macrolide efflux protein A (405 aa).

The next 11 helical transmembrane spans lie at 14–34 (IWAG…AIIF), 48–68 (MASL…GVLV), 76–98 (IMIG…AFYM), 145–165 (SLQS…YSVW), 168–188 (NAII…VAIV), 222–242 (FALL…NALF), 259–279 (ITEI…GLFG), 285–305 (ILLI…SGLL), 310–330 (FFIF…YSGV), 350–370 (LTGS…ALFA), and 373–393 (IGVN…AIVC).

It belongs to the major facilitator superfamily. Drug:H(+) antiporter-3 (DHA3) (TC 2.A.1.21) family.

It localises to the cell membrane. In terms of biological role, confers resistance to 14-membered macrolides including erythromycin and to 15-membered macrolides but not to 16-membered macrolides, lincosamides or analogs of streptogramin B. May function as an efflux pump to regulate intracellular macrolide levels. The sequence is that of Macrolide efflux protein A from Streptococcus pyogenes serotype M6 (strain ATCC BAA-946 / MGAS10394).